Here is a 964-residue protein sequence, read N- to C-terminus: DNA mismatch repair protein MSH2 (964 aa).

Residue 688-695 (GPNMGGKS) coordinates ATP. Positions 851–964 (DQSFGIHVAE…YLKYIKALLL (114 aa)) are interaction with MSH6.

It belongs to the DNA mismatch repair MutS family. Heterodimer consisting of MSH2-MSH6 (MutS alpha) or MSH2-MSH3 (MutS beta). Both heterodimers form a ternary complex with MutL alpha (MLH1-PMS1). MutS beta also forms a ternary complex with MutL beta (MLH1-MLH3), and possibly with a MLH1-MLH2 heterodimer. Both heterodimers interact with proliferating cell nuclear antigen (PCNA/POL30). This interaction is disrupted upon binding of the MutS heterodimers to mismatch DNA. Interacts with SAW1.

The protein resides in the nucleus. With respect to regulation, inhibited by Cd(2+). Functionally, component of the post-replicative DNA mismatch repair system (MMR). Forms two different heterodimers: MutS alpha (MSH2-MSH6 heterodimer) and MutS beta (MSH2-MSH3 heterodimer), which bind to DNA mismatches thereby initiating DNA repair. MSH2 seems to act as a scaffold for the other MutS homologs that provide substrate-binding and substrate specificity. When bound, heterodimers bend the DNA helix and shield approximately 20 base pairs. MutS alpha acts mainly to repair base-base and single insertion-deletion mismatches that occur during replication, but can also repair longer insertion-deletion loops (IDLs), although with decreasing efficiency as the size of the extrahelical loop increases. MutS beta acts mainly to repair IDLs from 2 to 13 nucleotides in size, but can also repair base-base and single insertion-deletion mismatches. After mismatch binding, MutS alpha or beta form a ternary complex with a MutL heterodimer, which is thought to be responsible for directing the downstream MMR events, including strand discrimination, excision, and resynthesis. ATP binding and hydrolysis play a pivotal role in mismatch repair functions. Both subunits bind ATP, but with differing affinities, and their ATPase kinetics are also very different. MSH6 binds and hydrolyzes ATP rapidly, whereas MSH2 catalyzes ATP at a substantially slower rate. Binding to a mismatched base pair suppresses MSH6-catalyzed ATP hydrolysis, but not the activity of MSH2. ATP binding to both subunits is necessary to trigger a change in MutS alpha interaction with mismatched DNA, converting MutS alpha into a sliding clamp capable of hydrolysis-independent movement along DNA, and also facilitates formation of ternary complexes containing MutS and MutL proteins and the mismatch. MutS beta also has a role in regulation of heteroduplex formation during mitotic and meiotic recombination. MutS beta binds to DNA flap structures predicted to form during recombination, and is required for 3' non-homologous tail removal (NHTR). MutS beta-binding alters the DNA conformation of its substrate at the ds/ssDNA junction and may facilitate its recognition and/or cleavage by the downstream nucleotide excision repair (NER) RAD1-RAD10 endonuclease. This chain is DNA mismatch repair protein MSH2 (MSH2), found in Saccharomyces cerevisiae (strain ATCC 204508 / S288c) (Baker's yeast).